Reading from the N-terminus, the 78-residue chain is MALTRKPNNYLNFEFYSTRGINYSSFSLTELYSFEHFSEIRHRALYSLGFFLCTTIVIFSNIKFVVKILKNSVSMIQF.

Residues 44 to 66 (ALYSLGFFLCTTIVIFSNIKFVV) form a helical membrane-spanning segment.

The protein belongs to the TatC family.

The protein resides in the plastid. It localises to the chloroplast membrane. This is an uncharacterized protein from Dictyota dichotoma.